The chain runs to 555 residues: Aerobic glycerol-3-phosphate dehydrogenase (555 aa).

An FAD-binding site is contributed by 24–52 (DLFIIGGGITGAGTALDAASRGMKVALSE).

Belongs to the FAD-dependent glycerol-3-phosphate dehydrogenase family. It depends on FAD as a cofactor.

It is found in the cytoplasm. It carries out the reaction a quinone + sn-glycerol 3-phosphate = dihydroxyacetone phosphate + a quinol. The protein operates within polyol metabolism; glycerol degradation via glycerol kinase pathway; glycerone phosphate from sn-glycerol 3-phosphate (aerobic route): step 1/1. The protein is Aerobic glycerol-3-phosphate dehydrogenase (glpD) of Bacillus subtilis (strain 168).